We begin with the raw amino-acid sequence, 6753 residues long: MSENSDEGKMQKGKGNEMNEDKIICKKEESNSSSYKFISFIKTIEDVKEKWKSSNLSRMDVLKLKNDDINNDDNMNNMDNMNNMNNMNNINNMNNMNNINNMNNMNNINNMNNMNNMNNMDNMNNNEKHPCSNNNYSFNNYIKESINYNTCTGYDKNNIMLNFLDKHKKSIFLKSRNNVNTFQSDINSSKTSSFFSCMSLKNMNYHNDINKYSNYRMMKNINGLHKLMILKNKNKDKKLFTNTSDKKNYYCLNNGDHIINEKDSFSDTYISYGCRKRRWKKKKKNIYNMLFYDESINDYPYKNLEKTTFSNSSKIYELFFNKYKKKKILNIECSGNKYKGLLRTNHFPPYANFNFTIRRKLQTSNVLGHFMISKCNFNRTICYRKYIKCVNKYKNNKRNRVINMYVKKENVDSIKGTFGNMNNGVHHNNSRRRLNNTSKNNISNNNNNMLKKKKGKKNYKGSFDQMIQEDTTLDQAKKESIKTVSKNERKNNMNKHSHDNKVSKLNKRMSNKRRNNKNCNPSNDMCNEDDVIEKICTTEEVNDDEKKKKLSRHKKFVCERKKGVILQNNNKCKKKNDDNIINNNNDDVNNCGDNINDHHDNRKDYDTTEDQNKCPKILSINFIKCDEKLFEKIYNDMFLRIGKIVTNKRKKYFLIYKIVKDSFFRILILNTEKLEKNILQVMAVQDVILCDKNVKIYSDPIYIRNNNKLYAIKFLKIFSLKYMKKVKNMSEVNFSDDDECKKENKDNISESSKRSNNIGEKKMLHVEKSEEHDDMTSDSNKEDTKIEEGRKKSNEVNIDVDDGEEEENVNNNDNNNDNNNDNDNSSDNNNNDDGSNDTESCSKINKSKYKGKEKKDVKENTDDKNLSDSNSNNSKKKFKVLNKAIKKDNDKKKKYEKKNIEGNSNNNMILVRSNSSSTSTSNSSSKSKSSNCRNKKNNQISICSKMDEKNSEQKKKNIKKKNKTCNEGKSKKDSTKLNCVKKVKNKSTDKKNGKSKINIKNEKKKKINNSKINKGRKGINKKDKGKGDDNNYVCLIYDDEKKFYFNFKKFKDIINVIKGSDESTRFYVDTNNNNHNNNMKKKMKLFKKVEKSLYLENLDIDTDEILFRRPKFFNCIIEESFENYDINYEGEDGNFYVFKNKLNKIRKKVTIKNETDSSDMYIELKDEEKGFKYIGYRVSFELKKDNKKKAQVKVGIIKYYSPKYKQFFIHHLENYKLYQTSDLSKGNNNNNNNNMKENGFVKCGRNSYSRACSKSLNSSIYINKYKNVELNEKITNIIDDDNNNNINSSCIYKNNLSNENNLCADKVLCDGNYNMLENDVDEMNNVDQNQKKRNDLVFSDVKGWYSPYFYNIKILNNYKEFERFDILEKCDKKKEMTDHVNNTLNKNEICSICSKRILFMKGHDHYSCSLSSAIYDMCSEAEKKEIDENNCIDIYWGIKCFTCEKKYHANCLEDDVLITKWFDKNILMKEYKKFIYKNSLKKEKRYFNNNGKNKRTKNGKKKKNTIHKLEDKNNSHVVSTASNSHSIEVSSSESAKKGNEKNTATCKKRKTSCSALYKKVKKGKNKNGENKNGENKNGDIKNDDIKNDDIKNDDIRNDDDKNDENEENTKECKNESNNIDNNNSSNDSLSDVDNNKDNGKSKNKKYRRCINYIPSVEHSDITYKKFICKDCYRCIYCCESIYDYKQTPNVANYVICKNCNMVAHGSCCFPNVPDIYLFNWKCDDCLKCNKCNYSNLCYINYNEWELHLDCCINCYKEYEKKNFCIMCNEKYDEDDSKKWVQCDVCKFWIHLSCDKNESRNIETLSNKNIDYKCPTCSIGTFHDKIERILYLLFLLDKYKNFTFHVPINYSIYWRIVKIPMNLYIMKKKIWEKKYDTILDFLYDFMLIIHNAKMVHMPNTPIYKNACIFEKKGRVIIKNMFNMTNEYLNKCIEDCVENYKNEINNLDSFQIGHDNNNNNDNNINNNNKMEGVNNESVIFMNDGCNNKLYNKEGTNMTCVNMDSINKNLNDMNNNNNNNNKMEVFCGQNNIKLNEYYINKEGYNIISNDNNMNYDNYNNVQNIGMKKMYTNINDYNSSNVPNESVYNKENFINNSSIYNINENNTYDLNCDKKLIFDNKYNLSAYQNEGDIMNYNGMYQKNINISNPPYNNNNNNNNNMVKEGEKYILNNDDMNNISISKDNDINNNCNNIANIYRKRKLEQYKKDITQYELYELFDFKNDSFFINRNKEMFSCSSNDHNLIDYNILYVKLNGKIYFNTFYDKHDEFDVCKILKVHFLKNNRRGGGNHIMCPKIRNNQNLKEDVTQCDEEKIEQNNDNGCDDEYDNNNNNNNNIGSSSISSINKIHMNDTYNNSINDNSLRHNNNCSVFINSNIFMIDVLNEKVKINNIVKETKRIISPINNVLKFLKCIQIVFFYDNNTNECTEKEKNVISSNLCNNNFEKYVNINSIDHNNMSGEKKRKSVEEIMSVVDNKSYYGFNKCSEYILYSSNEYDRAKKKENKRIKLLKNDILKECCYICGSIEYKNNFIYCCICGISVHYSCANIVHPFLFNLNDYKDHKKEINNILNIITRNFKCDNCIKCDNCLLHFDSSLKHNLYFKLKNLNVSCNNNRMERRTYNYLYDVKIKVFTTNKEGTKQTGKCVMKTKENDIIKLDEDNKQKDELNEANKECFYKQDDVHVEKNCDELLYKNSFNSEECNKNEKKKNDNNVDENDDNVDKNDDNNNNNNNGDDNNNIDNTLVDGDMNKLENDLNNSNDFSINEEKKNNKDTKKYMISSKEEINKEIENVSNQMDNKNNDVDKKKNISNEEIILDNTKNSCHDNDSNVLYNESVKKSFNACKIEKKEGIEKDDNLGHVNKLRNKRLIKILSIREEGNKLVKCFCCGKPSHDECFYIIDNNTYKNKICTLKKTVKNYVRKKNVENKCNTKVEMNSDVILLDDNIKDHCSVNKTGDEHMNNNEFIDISKDKISEHNILDESFNSGVVCSDKNRKDQVVFIDGDVKNNDISIIEENVTYYTSKEVNNNSVLKNERDVESTSELYIGGDKHVYNKLETDNAEMESNNNNNNNNNNSDCNNNVSTLSTAAVNTINRSHMSPQKNDNDMNKINQDDIIHTKMNDKKNVKDDNGNMTNLNNNIDKNDRNLDTILKEHSVIMQKLDELKENRNKEHDGEFYNNLILNNQFLIHSFKVEEGVEINKDSIIINKKMFNKYILNKIYELLDNKKRVRIKDLFNLFNLDEFRCSFILYEVLNALNTYLNEKLKEYNLTKIRNGTYKKYENEIRNENFCLFNKYLIVNNRDKINITKVVLKIQSLITEILSDAMNGNIVDEKDKSKKKESISSDFNVVNNVKEYNIQNGCINIDINNYFKGEYINFKPILCSSQFNLDTNAQIFLQNKANLSMFQKSASYNNNFENNLENNFVNNKMNNMNNMKNNMNNMNNIMNNIMNNNMNNIMNNIMNNNMNNIINNNNIFNNDVSNNVDMQHKSDQICIFNSNNIHSVPIFNNKPYMDNNFNNMVLVNKSNDINGDDILCNMKNLYNKSVCNKQEKNGYSVVHKNICDVNFPYNDTKIWNGDITNKSKTYTYTNINNNGSVIDYRKWSSVNRSVSMNNMNCIRSNTNPRILSGTDHILKNNHMNKRNNVNNTYGVNNVNNVNNVNNTNNVSCFMMRRKIRSNSLHDMNDKMNKMNDNINININNLNIINNNINICNMNYPIDRVDSMNNTFNRNNIIISQNTKENTNILNFNGNDFCNNNNNNNNIINKENNFGTSNFNSPFHVGNLAKSYSYNNTMSEKNMNEVICPNVRNNMSNMNNMNNMNNMNNMNNMNNMNNMNNMDSINNVISYSCTNPNMKDINFNSMRRSSSTPKKSTGLLKNYFNIDIDQYNKTNSHIMNYNVSINNDMNNVYINNNNNHNNNNNNSCNNFINNDVINMNNVGTFYNFNQNAESYNNISNNIKCSNINNIIINNNMNVNNLNYFCNNKEVGFKENDLNINQKVHTINKDPYEMNHSKMYVTFPYCNTKDNNSNKSSLKSNVLRLDKIRNRNIKKPLLYNRSSSMHSSDNLIYNVHNNNRNSPAEFTSDIIINKERNMENNYNTSINYVNNNITNNIIVANNNCYHTANNFIQINYSPSSSNIVNINKDSYKYDISLENCIDLGSTNTCMYNLNNIHNKDINNMPLEDCFSHIGSCPNEQNEHEDEINEDNKKDVTKQQKKRKLNSVSKKDMLIKKEMNADDNINCKENTLQNESPKKDDELRENDLKTTTENIKSNEVEDKEFVDKKKKRKLSVKVKVNVNVKVELQDTENDENKEKGIKKEKNDEEKKNDAEKKKKENKKGREKSVKVRKTKNQTQVERENEKENLMENVTNDKTSDIINNKTSDIINNKTSDIINNKTSDIINNKTSDIINNKTSDIINNKTSDIINDKTNDIINNKTSDCLSLVQNNKPVIHIDCNTSLDITDGYNNLISCEGRKKGKYNIEENNINDDNMFQYSDAFDSEGSIKYKEEYDKIYIPNNKNKINNINNFLIKNNLLLKSKFMRITPNTYLCRNCVLLYQNDFSYNTYEEEINKMERSILNEYEKGVIKKNEYVHDAIQNDKVVNTDENIMTNVLADKVDDMKIVEKLNCPLNVEEKGIEENILYVKREGDELINYGKHNDQMKEEEESEVVLGDVDFLKNEKKDNLILPYDEKYTGVNNNNSSIIMSLKKCDKNITKKKGKDKNFNNIKYFKIDNNKSLWYENYMYWMNKISLYNNLFFTNMYYKENVIKCIDMNNLFLNKMNIYKCSICCMLYHCSNMDRNNFFIKNEDKMRKKTKKNDCLKLLYICNLCTIKYDYVLKIITYKENNKCWNEFYTDNYYKNNFYELVYFIIKIIYKNIYINNFFNIFCSIMDNIFKEHKTLNMKLLSLFLFSNKYFKYEEFYHFFNNKMKKDDRVFKKTFHMKNVCFMPRYSKKSIMYYIFSLFCNKIYNINKKKKCIHNKRSYIHNKQSYIHNKRTDVMYDNNVYFHLYELARKKLYDYSEKSQKPFDEIINMCLYLLYLYYLCNVLYKCVRINNVLKGDKDKGDILCDNKKMKYYKKRKNIKLFLNIINSNEYINVNKIFHGKCIYELPFYVNKERIKKKRNSVREFINNNDNNQENNADKKKDHHIYNQNYNHNSYLCDIGKVDESLHSKEDNKKDVIITNNASIDSTSPSINMNKSVVSSIYSYNSNKEKKKNMRKCIKGLHHTIKNKLNLYVKLMLDKYIQESSNYIKNENKDIKKTIESKNKDDKICLLCNFSNYIYKGRLIPFYDIYIHSECLKWSLNCTQCCYEENKNKTIVNNDNGTKVDVNLDNADDIINNNNMNMLDNNMNGPIKNNEENNNNNDNNNNNNNNNNNNNNNNNNNNNNNNNNNNNNNNNNNNNNNNNNNNNNKSKKNTQKKKDHVNDVKINQNNSNNKNNKKKKTSKDNEELKSDNTKNNKTKDSDGNNNDKTKLEKINLIHNKQSNEISCKIDNNNIINDISTNNPYMKEKKCKNKEKNRGSKNNNIKNIKLIDMCEWKEDRNFYNIYENMIEVDEDNVKEIIFDSIKSTCFLCGYNNASVYCSNEDCNVKFHLNCAFYSTVIKDPSNNPFFRYLKCFNLVEFNKDTIFYKNMYHDPNVNNSVSSHVCTDNRYYKEMIEKNYVDIFPVHIIYKIKKIWCNKCWNKKKIYNLFYIQKCFMSPYYYDNIKTEESVPNKITPMKKDKSDITNEVKEEKDDDILYDSKVHKEYFTLRNILMDDNLLNNIIRNKKSCSMEIQENNDKMKGDNNIDNEDVRNVLCDGEERVSYNRNKLNDILLKMDMKDILKYFIDFYFENGSYYILDNILYSVNHCVKIKYKKKSLYNIQDVLNKETKIGTMMRELEGLISKYVNRSNDNNYMDRKYDMLLLKNIKSDINNDNNNDINNNDNNNNENNNENINDNNNNNNNNNNNNNNNNSNNNNNNNYYYYHNNEGKYNEQGSYQHIDIQNIINDKSVENLIKGYFILKNFLHIGNNNITLQNEDLLILKKSENSFVHNLYDNDKVYNVHVPYVYTKKMNTSYMNKKENDKKYNKSVNKNSCKSKNSILDNINFDKNKNKITKKYTAFIIDNNEYTTDCSNEENNTSDDEENENRKNENDDDNIPEHIKMNNIMNSQQKKENDFKNINLYFQLTNVIKKVSINKLEGNFFNYEEKGNLLGSNVSKIKMNELLECNVGEENFCDDDQKFSDNKNYASDDEEKKKKKRKNQTRFYNYPKRISTTNNNKNVNVLVNSLNNNLINKKEYFLNIIMNENNDLYMKKINEKYFPNYHPKKRKKKKLDNTSYINHNYNYNYPYNYNLLSNNSKSRILKVGCHNILNIGDILKYDGDKIIYPCGYLNMRIFYNLPSYYLFQIYKNANIDDINRKTKLLEKIFLQLRATYIFSITLREQNFFFSILLFPLINIDYFSESDATNFILAEGYNINEVYMKFLSLFNSQNYICDDMNNDYSHYNAKYGNIYKCLETYILKSVEHNKFIDSHTFFGLTLPCVVYQIKYKLFKYMYKHLSEKIKTYIKKSKDSVMKKRIKGCTREVVYNDNVLCKYSNLDTTIFKENEKENEKNIRKTVKYKYNINSAMSYRYLMNISSNLRLYVKKSSIHGYGLYTCEFINEGEPVIEYIGEYIRNIISDKREKYYDKIESSCYMFRLNENIIIDATKWGNVSRFINHSCEPNCFCKIVSCDQNLKHIVIFAKRDIAAHEEITYDYQFGVESEGKKLICLCGSSTCLGRMN.

Disordered stretches follow at residues 1–28, 418–458, 470–522, 736–1024, 1487–1545, and 1557–1642; these read MSEN…CKKE, FGNM…GKKN, DTTL…CNPS, DDDE…KKDK, FNNN…NTAT, and YKKV…GKSK. Positions 435-449 are enriched in low complexity; the sequence is NNTSKNNISNNNNNM. Positions 475-502 are enriched in basic and acidic residues; the sequence is QAKKESIKTVSKNERKNNMNKHSHDNKV. Residues 504–516 show a composition bias toward basic residues; the sequence is KLNKRMSNKRRNN. The span at 739–794 shows a compositional bias: basic and acidic residues; sequence ECKKENKDNISESSKRSNNIGEKKMLHVEKSEEHDDMTSDSNKEDTKIEEGRKKSN. A compositionally biased stretch (acidic residues) spans 798–808; the sequence is IDVDDGEEEEN. Residues 809 to 833 show a composition bias toward low complexity; it reads VNNNDNNNDNNNDNDNSSDNNNNDD. Composition is skewed to basic and acidic residues over residues 853-866 and 885-900; these read EKKD…DKNL and IKKD…KKNI. Residues 912–932 are compositionally biased toward low complexity; sequence RSNSSSTSTSNSSSKSKSSNC. Basic and acidic residues-rich tracts occupy residues 945 to 955 and 964 to 975; these read KMDEKNSEQKK and TCNEGKSKKDST. 2 stretches are compositionally biased toward basic residues: residues 1002–1019 and 1492–1506; these read EKKK…RKGI and KNKR…KNTI. Low complexity predominate over residues 1522–1533; the sequence is SNSHSIEVSSSE. Positions 1566 to 1599 are enriched in basic and acidic residues; the sequence is KNGENKNGENKNGDIKNDDIKNDDIKNDDIRNDD. Over residues 1615–1632 the composition is skewed to low complexity; the sequence is ESNNIDNNNSSNDSLSDV. PHD-type zinc fingers lie at residues 1671 to 1728, 1761 to 1819, and 2510 to 2579; these read CYRC…CLKC, KNFC…CSIG, and KECC…CIKC. The RING-type; degenerate zinc finger occupies 1764-1817; sequence CIMCNEKYDEDDSKKWVQCDVCKFWIHLSCDKNESRNIETLSNKNIDYKCPTCS. One can recognise a Bromo domain in the interval 1816–1919; the sequence is CSIGTFHDKI…KKGRVIIKNM (104 aa). A compositionally biased stretch (basic and acidic residues) spans 2694 to 2705; that stretch reads ECNKNEKKKNDN. 5 disordered regions span residues 2694 to 2768, 3053 to 3072, 4182 to 4254, 4295 to 4349, and 5331 to 5460; these read ECNK…KDTK, EMES…CNNN, NEQN…LKTT, ENDE…ENEK, and NMNM…NNDK. Residues 2720–2735 are compositionally biased toward low complexity; the sequence is NNNNNNNGDDNNNIDN. Over residues 2758 to 2768 the composition is skewed to basic and acidic residues; it reads NEEKKNNKDTK. A compositionally biased stretch (low complexity) spans 3057-3072; that stretch reads NNNNNNNNNNSDCNNN. 3 stretches are compositionally biased toward basic and acidic residues: residues 4212 to 4223, 4239 to 4254, and 4297 to 4321; these read SKKDMLIKKEMN, SPKK…LKTT, and DENK…EKKK. Residues 4322 to 4338 are compositionally biased toward basic residues; it reads KENKKGREKSVKVRKTK. Composition is skewed to low complexity over residues 5331–5340 and 5348–5400; these read NMNMLDNNMN and ENNN…NNNN. The span at 5401-5411 shows a compositional bias: basic residues; that stretch reads KSKKNTQKKKD. Low complexity predominate over residues 5416–5426; it reads VKINQNNSNNK. Residues 5434–5460 show a composition bias toward basic and acidic residues; the sequence is SKDNEELKSDNTKNNKTKDSDGNNNDK. Residues 5496–5532 form a C2HC pre-PHD-type; degenerate zinc finger; it reads YMKEKKCKNKEKNRGSKNNNIKNIKLIDMCEWKEDRN. Residues 5558–5610 form a PHD-type 4; degenerate zinc finger; it reads STCFLCGYNNASVYCSNEDCNVKFHLNCAFYSTVIKDPSNNPFFRYLKCFNLV. The span at 5905–5952 shows a compositional bias: low complexity; the sequence is NDNNNDINNNDNNNNENNNENINDNNNNNNNNNNNNNNNNSNNNNNNN. Disordered stretches follow at residues 5905–5958, 6103–6133, and 6212–6235; these read NDNN…YYHN, DCSN…PEHI, and KFSD…KNQT. Residues 6118–6133 show a composition bias toward basic and acidic residues; sequence ENRKNENDDDNIPEHI. Residues 6612–6729 enclose the SET domain; it reads LRLYVKKSSI…AHEEITYDYQ (118 aa). One can recognise a Post-SET domain in the interval 6737–6753; that stretch reads KKLICLCGSSTCLGRMN.

Belongs to the class V-like SAM-binding methyltransferase superfamily.

The catalysed reaction is L-lysyl-[histone] + S-adenosyl-L-methionine = N(6)-methyl-L-lysyl-[histone] + S-adenosyl-L-homocysteine + H(+). Probable histone methyltransferase. This is Putative histone-lysine N-methyltransferase 1 (SET1) from Plasmodium falciparum (isolate 3D7).